Here is a 160-residue protein sequence, read N- to C-terminus: Putative antiporter subunit mnhE2 (160 aa).

The next 3 membrane-spanning stretches (helical) occupy residues 22-42 (HFKFSTFFSGYLIGLIVIYIL), 55-75 (IWVAIKFLGVYLYQLITSSIS), and 100-120 (SDWAITFLTILIIITPGSTVI).

Belongs to the CPA3 antiporters (TC 2.A.63) subunit E family. As to quaternary structure, may form a heterooligomeric complex that consists of seven subunits: mnhA2, mnhB2, mnhC2, mnhD2, mnhE2, mnhF2 and mnhG2.

It is found in the cell membrane. In Staphylococcus aureus (strain Mu3 / ATCC 700698), this protein is Putative antiporter subunit mnhE2 (mnhE2).